The primary structure comprises 336 residues: Holliday junction branch migration complex subunit RuvB (336 aa).

A large ATPase domain (RuvB-L) region spans residues 1 to 182 (MKERIVNLET…FGMSFRMQFY (182 aa)). Residues Leu21, Arg22, Gly63, Lys66, Thr67, Ser68, 129 to 131 (EDF), Arg172, Tyr182, and Arg219 contribute to the ATP site. Thr67 contributes to the Mg(2+) binding site. Positions 183-253 (SPSELALIIK…ITLHALNELG (71 aa)) are small ATPAse domain (RuvB-S). The segment at 256 to 336 (ELGFDEADLA…IPTLKSQSLF (81 aa)) is head domain (RuvB-H). Positions 310 and 315 each coordinate DNA.

Belongs to the RuvB family. In terms of assembly, homohexamer. Forms an RuvA(8)-RuvB(12)-Holliday junction (HJ) complex. HJ DNA is sandwiched between 2 RuvA tetramers; dsDNA enters through RuvA and exits via RuvB. An RuvB hexamer assembles on each DNA strand where it exits the tetramer. Each RuvB hexamer is contacted by two RuvA subunits (via domain III) on 2 adjacent RuvB subunits; this complex drives branch migration. In the full resolvosome a probable DNA-RuvA(4)-RuvB(12)-RuvC(2) complex forms which resolves the HJ.

The protein resides in the cytoplasm. It catalyses the reaction ATP + H2O = ADP + phosphate + H(+). Functionally, the RuvA-RuvB-RuvC complex processes Holliday junction (HJ) DNA during genetic recombination and DNA repair, while the RuvA-RuvB complex plays an important role in the rescue of blocked DNA replication forks via replication fork reversal (RFR). RuvA specifically binds to HJ cruciform DNA, conferring on it an open structure. The RuvB hexamer acts as an ATP-dependent pump, pulling dsDNA into and through the RuvAB complex. RuvB forms 2 homohexamers on either side of HJ DNA bound by 1 or 2 RuvA tetramers; 4 subunits per hexamer contact DNA at a time. Coordinated motions by a converter formed by DNA-disengaged RuvB subunits stimulates ATP hydrolysis and nucleotide exchange. Immobilization of the converter enables RuvB to convert the ATP-contained energy into a lever motion, pulling 2 nucleotides of DNA out of the RuvA tetramer per ATP hydrolyzed, thus driving DNA branch migration. The RuvB motors rotate together with the DNA substrate, which together with the progressing nucleotide cycle form the mechanistic basis for DNA recombination by continuous HJ branch migration. Branch migration allows RuvC to scan DNA until it finds its consensus sequence, where it cleaves and resolves cruciform DNA. The protein is Holliday junction branch migration complex subunit RuvB of Helicobacter acinonychis (strain Sheeba).